The following is a 430-amino-acid chain: Phosphoserine aminotransferase 1, chloroplastic (430 aa).

A chloroplast-targeting transit peptide spans 1–51; sequence MAATTNSFLVGSNNTQIPALKPKSSSQSFLHLSKPNTVNFVSKTKPVAVRC. The residue at position 52 (V52) is an N-acetylvaline. Position 111 (R111) interacts with L-glutamate. Pyridoxal 5'-phosphate is bound by residues 145 to 146, W171, T221, D241, and Q264; that span reads AT. The residue at position 265 (K265) is an N6-(pyridoxal phosphate)lysine. 306–307 lines the pyridoxal 5'-phosphate pocket; the sequence is NT.

It belongs to the class-V pyridoxal-phosphate-dependent aminotransferase family. SerC subfamily. Homodimer. It depends on pyridoxal 5'-phosphate as a cofactor. In terms of tissue distribution, ubiquitous, but expressed preferentially in light-grown roots and shoots. Detected in root meristems and in root tissues surrounding the vascular bundle.

The protein resides in the plastid. Its subcellular location is the chloroplast. The enzyme catalyses O-phospho-L-serine + 2-oxoglutarate = 3-phosphooxypyruvate + L-glutamate. It carries out the reaction 4-(phosphooxy)-L-threonine + 2-oxoglutarate = (R)-3-hydroxy-2-oxo-4-phosphooxybutanoate + L-glutamate. It functions in the pathway amino-acid biosynthesis; L-serine biosynthesis; L-serine from 3-phospho-D-glycerate: step 2/3. It participates in cofactor biosynthesis; pyridoxine 5'-phosphate biosynthesis; pyridoxine 5'-phosphate from D-erythrose 4-phosphate: step 3/5. Its activity is regulated as follows. Inhibited by high concentration of cysteine and by 3-phosphonooxypyruvate. Not inhibited by serine, threonine, valine, glycine, tryptophan and O-acetyl-L-serine. In terms of biological role, involved in the plastidial phosphorylated pathway of serine biosynthesis (PPSB). Catalyzes the reversible conversion of 3-phosphohydroxypyruvate to phosphoserine. The protein is Phosphoserine aminotransferase 1, chloroplastic of Arabidopsis thaliana (Mouse-ear cress).